The chain runs to 130 residues: NADH-quinone oxidoreductase subunit A (130 aa).

The next 3 helical transmembrane spans lie at 15–35 (AIHV…ATII), 67–87 (FLIA…FAWA), and 95–115 (WVGL…LIYL).

It belongs to the complex I subunit 3 family. In terms of assembly, NDH-1 is composed of 14 different subunits. Subunits NuoA, H, J, K, L, M, N constitute the membrane sector of the complex.

The protein resides in the cell inner membrane. It carries out the reaction a quinone + NADH + 5 H(+)(in) = a quinol + NAD(+) + 4 H(+)(out). NDH-1 shuttles electrons from NADH, via FMN and iron-sulfur (Fe-S) centers, to quinones in the respiratory chain. The immediate electron acceptor for the enzyme in this species is believed to be ubiquinone. Couples the redox reaction to proton translocation (for every two electrons transferred, four hydrogen ions are translocated across the cytoplasmic membrane), and thus conserves the redox energy in a proton gradient. The polypeptide is NADH-quinone oxidoreductase subunit A (Rhodopseudomonas palustris (strain BisA53)).